Consider the following 168-residue polypeptide: Protein-export protein SecB (168 aa).

Belongs to the SecB family. As to quaternary structure, homotetramer, a dimer of dimers. One homotetramer interacts with 1 SecA dimer.

The protein resides in the cytoplasm. Its function is as follows. One of the proteins required for the normal export of preproteins out of the cell cytoplasm. It is a molecular chaperone that binds to a subset of precursor proteins, maintaining them in a translocation-competent state. It also specifically binds to its receptor SecA. The chain is Protein-export protein SecB from Rhizobium meliloti (strain 1021) (Ensifer meliloti).